A 631-amino-acid polypeptide reads, in one-letter code: DDB1- and CUL4-associated factor 8-like protein 2 (631 aa).

Disordered regions lie at residues 1-91 (MSHQ…EDFE) and 108-163 (EEET…HEQY). The segment covering 44 to 54 (SELSVTVTGDG) has biased composition (polar residues). 2 stretches are compositionally biased toward acidic residues: residues 77–88 (SASEDIELESLE) and 108–147 (EEETEREEEDEEIQEEGGEEEEEEEEEEEEEEEEEEEEEE). WD repeat units follow at residues 226 to 265 (DHVGCVNTVHFNQRGTRLASSGDDLKVIVWDWVRQRPVLN), 269 to 310 (GHTN…YFNN), 316 to 356 (QHRG…PASK), 364 to 404 (DKKV…KKEN), 420 to 459 (DFPTNITCVVYSHDGTELLASYNDDDIYLFNSSHSDGAQY), 467 to 507 (RNNT…IIQF), and 511 to 550 (SREGTINCLEPHPYLPVLACSGLDHDVKIWTPTAKAATEL). The interval 594-631 (QDWRSGEAEFPDEESDESSSTSETSEEEVQDRVQCMPS) is disordered.

It belongs to the WD repeat DCAF8 family.

The protein is DDB1- and CUL4-associated factor 8-like protein 2 (DCAF8L2) of Homo sapiens (Human).